The primary structure comprises 229 residues: MAIGKRLKKAREGVDRTKLYPLDEAVKMVKERATSKFDETIEVALNLGVDPRHADQMVRGVVMLPNGTGRTLRVGVFARGAKADEAKAAGADVVGAEDLVEQVQGGNINFDRCIATPDMMPLVGRLGKVLGPRGMMPNPKIGTVTMDVAGAVKGAKGGSVEFRVEKAGIVQAGVGKASFTEEKLVENIKALADAVTKAKPTGAKGTYIQRVAVSSSMGPGVKVEPGSIH.

The protein belongs to the universal ribosomal protein uL1 family. In terms of assembly, part of the 50S ribosomal subunit.

Functionally, binds directly to 23S rRNA. The L1 stalk is quite mobile in the ribosome, and is involved in E site tRNA release. Its function is as follows. Protein L1 is also a translational repressor protein, it controls the translation of the L11 operon by binding to its mRNA. The chain is Large ribosomal subunit protein uL1 from Rhodopseudomonas palustris (strain BisB5).